Here is a 156-residue protein sequence, read N- to C-terminus: SsrA-binding protein (156 aa).

This sequence belongs to the SmpB family.

The protein resides in the cytoplasm. Functionally, required for rescue of stalled ribosomes mediated by trans-translation. Binds to transfer-messenger RNA (tmRNA), required for stable association of tmRNA with ribosomes. tmRNA and SmpB together mimic tRNA shape, replacing the anticodon stem-loop with SmpB. tmRNA is encoded by the ssrA gene; the 2 termini fold to resemble tRNA(Ala) and it encodes a 'tag peptide', a short internal open reading frame. During trans-translation Ala-aminoacylated tmRNA acts like a tRNA, entering the A-site of stalled ribosomes, displacing the stalled mRNA. The ribosome then switches to translate the ORF on the tmRNA; the nascent peptide is terminated with the 'tag peptide' encoded by the tmRNA and targeted for degradation. The ribosome is freed to recommence translation, which seems to be the essential function of trans-translation. In Staphylococcus haemolyticus (strain JCSC1435), this protein is SsrA-binding protein.